The sequence spans 104 residues: Circadian clock oscillator protein KaiB (104 aa).

The protein belongs to the KaiB family. The KaiABC complex composition changes during the circadian cycle to control KaiC phosphorylation. Complexes KaiC(6), KaiA(2-4):KaiC(6), KaiB(6):KaiC(6) and KaiC(6):KaiB(6):KaiA(12) are among the most important forms, many form cooperatively. Undergoes a major conformational rearrangment; in the free state forms homotetramers as a dimer of dimers. When bound to the CI domain of KaiC switches to a monomeric thioredoxin-fold (KaiB(fs)). KaiB(fs) binds CikA, leading it to dephosphorylate phospho-RpaA.

Functionally, key component of the KaiABC oscillator complex, which constitutes the main circadian regulator in cyanobacteria. Complex composition changes during the circadian cycle to control KaiC phosphorylation. KaiA stimulates KaiC autophosphorylation, while KaiB sequesters KaiA, leading to KaiC autodephosphorylation. Phospho-Ser-431 KaiC accumulation triggers binding of KaiB to form the KaiB(6):KaiC(6) complex, leading to changes in output regulators CikA and SasA. KaiB switches to a thioredoxin-like fold (KaiB(fs)) when bound to KaiC. KaiB(6):KaiC(6) formation exposes a site for KaiA binding that sequesters KaiA from KaiC, making the KaiC(6):KaiB(6):KaiA(12) complex that results in KaiC autodephosphorylation. A metamorphic protein which reversibly switches between an inactive tetrameric fold and a rare, thioredoxin-like monomeric fold (KaiB(fs)). KaiB(fs) binds phospho-KaiC, KaiA and CikA. KaiA and CikA compete for binding to KaiB(fs), and KaiB(fs) and SasA compete for binding to KaiC, thus the clock oscillator and output signal pathway are tightly coupled. The sequence is that of Circadian clock oscillator protein KaiB from Microcystis aeruginosa (strain NIES-843 / IAM M-2473).